The chain runs to 560 residues: Putative transport protein ESA_02488 (560 aa).

5 helical membrane-spanning segments follow: residues 8–28 (LLNG…LCLG), 32–52 (LGSV…LLGQ), 66–86 (FMLF…SIFF), 91–111 (NYLM…LGLG), and 158–178 (HLSL…IFGA). RCK C-terminal domains are found at residues 200 to 288 (RGLD…SFRN) and 292 to 373 (VFDR…RIGF). 5 consecutive transmembrane segments (helical) span residues 383–403 (LLAF…TFQF), 406–426 (FSFG…LGFL), 447–467 (FGLM…IGHG), 475–495 (MLFA…LFGA), and 539–559 (YAIA…IWPG).

It belongs to the AAE transporter (TC 2.A.81) family. YbjL subfamily.

The protein resides in the cell membrane. In Cronobacter sakazakii (strain ATCC BAA-894) (Enterobacter sakazakii), this protein is Putative transport protein ESA_02488.